A 205-amino-acid polypeptide reads, in one-letter code: Methylthioribulose-1-phosphate dehydratase (205 aa).

Zn(2+) is bound by residues H96 and H98.

The protein belongs to the aldolase class II family. MtnB subfamily. Zn(2+) is required as a cofactor.

It carries out the reaction 5-(methylsulfanyl)-D-ribulose 1-phosphate = 5-methylsulfanyl-2,3-dioxopentyl phosphate + H2O. Its pathway is amino-acid biosynthesis; L-methionine biosynthesis via salvage pathway; L-methionine from S-methyl-5-thio-alpha-D-ribose 1-phosphate: step 2/6. Catalyzes the dehydration of methylthioribulose-1-phosphate (MTRu-1-P) into 2,3-diketo-5-methylthiopentyl-1-phosphate (DK-MTP-1-P). This is Methylthioribulose-1-phosphate dehydratase from Pseudomonas aeruginosa (strain ATCC 15692 / DSM 22644 / CIP 104116 / JCM 14847 / LMG 12228 / 1C / PRS 101 / PAO1).